We begin with the raw amino-acid sequence, 446 residues long: Exodeoxyribonuclease 7 large subunit (446 aa).

Belongs to the XseA family. As to quaternary structure, heterooligomer composed of large and small subunits.

The protein resides in the cytoplasm. It carries out the reaction Exonucleolytic cleavage in either 5'- to 3'- or 3'- to 5'-direction to yield nucleoside 5'-phosphates.. In terms of biological role, bidirectionally degrades single-stranded DNA into large acid-insoluble oligonucleotides, which are then degraded further into small acid-soluble oligonucleotides. This Streptococcus thermophilus (strain ATCC BAA-250 / LMG 18311) protein is Exodeoxyribonuclease 7 large subunit.